Here is a 347-residue protein sequence, read N- to C-terminus: Chlorophyllase type 0 (347 aa).

The first 19 residues, 1–19 (MAKLLLLIFGVFIFVNSQA), serve as a signal peptide directing secretion. Residues 20 to 30 (QTFPTILEKHN) constitute a propeptide that is removed on maturation. The short motif at 160–164 (GHSRG) is the GXSXG element. Ser162 acts as the Nucleophile in catalysis. Asp191 serves as the catalytic Charge relay system. Residues Asn215, Asn229, and Asn251 are each glycosylated (N-linked (GlcNAc...) asparagine). His262 (charge relay system) is an active-site residue. Residue Asn321 is glycosylated (N-linked (GlcNAc...) asparagine).

The protein belongs to the AB hydrolase superfamily. Lipase family.

The enzyme catalyses a chlorophyll + H2O = a chlorophyllide + phytol + H(+). It catalyses the reaction chlorophyll a + H2O = phytol + chlorophyllide a + H(+). It functions in the pathway porphyrin-containing compound metabolism; chlorophyll degradation. With respect to regulation, inhibited by diisopropyl fluorophosphate (DFP), phenylmethanesulfonyl fluoride (PMSF) or p-chloromercuribenzoic acid (PCMB), but not by N-ethylmaleimide (NEM) or iodoacetamide. Catalyzes the hydrolysis of ester bond in chlorophyll to yield chlorophyllide and phytol. The polypeptide is Chlorophyllase type 0 (Chenopodium album (Fat hen)).